A 152-amino-acid chain; its full sequence is Deoxyuridine 5'-triphosphate nucleotidohydrolase (152 aa).

Residues 71 to 73 (RSG), N84, 88 to 90 (LID), and M98 contribute to the substrate site.

The protein belongs to the dUTPase family. Mg(2+) is required as a cofactor.

It carries out the reaction dUTP + H2O = dUMP + diphosphate + H(+). It participates in pyrimidine metabolism; dUMP biosynthesis; dUMP from dCTP (dUTP route): step 2/2. This enzyme is involved in nucleotide metabolism: it produces dUMP, the immediate precursor of thymidine nucleotides and it decreases the intracellular concentration of dUTP so that uracil cannot be incorporated into DNA. This is Deoxyuridine 5'-triphosphate nucleotidohydrolase from Klebsiella pneumoniae subsp. pneumoniae (strain ATCC 700721 / MGH 78578).